A 546-amino-acid polypeptide reads, in one-letter code: Probable T-complex protein 1 subunit theta (546 aa).

Positions 527-546 (MSKPAGGPKPPGPNPHWDDD) are disordered.

This sequence belongs to the TCP-1 chaperonin family. In terms of assembly, heterooligomeric complex of about 850 to 900 kDa that forms two stacked rings, 12 to 16 nm in diameter.

The protein resides in the cytoplasm. Its function is as follows. Molecular chaperone; assists the folding of proteins upon ATP hydrolysis. Known to play a role, in vitro, in the folding of actin and tubulin. The chain is Probable T-complex protein 1 subunit theta (cct8) from Schizosaccharomyces pombe (strain 972 / ATCC 24843) (Fission yeast).